A 144-amino-acid polypeptide reads, in one-letter code: MLMPKRVKFRREHRGKMRGRAKGGTEVHFGEYGLQALEASWITNRQIEAARIAMTRYMKRGGKVWIKIFPSKPYTAKPLEVRMGSGKGAPEGWVAVVKPGKVMFEISGVSEEVAREALRLASHKLPVKCKFVKREEVGGDANEN.

The protein belongs to the universal ribosomal protein uL16 family. As to quaternary structure, part of the 50S ribosomal subunit.

Its function is as follows. Binds 23S rRNA and is also seen to make contacts with the A and possibly P site tRNAs. The polypeptide is Large ribosomal subunit protein uL16 (Halalkalibacterium halodurans (strain ATCC BAA-125 / DSM 18197 / FERM 7344 / JCM 9153 / C-125) (Bacillus halodurans)).